We begin with the raw amino-acid sequence, 350 residues long: Geranylgeranyl diphosphate synthase (350 aa).

Isopentenyl diphosphate contacts are provided by lysine 70, arginine 73, and histidine 102. 2 residues coordinate Mg(2+): aspartate 109 and aspartate 113. The DDXXD motif motif lies at 109–113 (DDVMD). An isopentenyl diphosphate-binding site is contributed by arginine 119. The DDXXD motif motif lies at 240 to 244 (DDLIG).

Belongs to the FPP/GGPP synthase family. Mg(2+) serves as cofactor.

The enzyme catalyses isopentenyl diphosphate + (2E,6E)-farnesyl diphosphate = (2E,6E,10E)-geranylgeranyl diphosphate + diphosphate. It functions in the pathway isoprenoid biosynthesis; geranylgeranyl diphosphate biosynthesis; geranylgeranyl diphosphate from farnesyl diphosphate and isopentenyl diphosphate: step 1/1. In terms of biological role, catalyzes the condensation of isopentenyl pyrophosphate (IPP) with (2E,6E)-farnesyl diphosphate (E,E-FPP) to yield geranylgeranyl diphosphate (GGPP). This Mycobacterium tuberculosis (strain ATCC 25618 / H37Rv) protein is Geranylgeranyl diphosphate synthase.